A 120-amino-acid chain; its full sequence is Large ribosomal subunit protein bL20 (120 aa).

This sequence belongs to the bacterial ribosomal protein bL20 family.

Binds directly to 23S ribosomal RNA and is necessary for the in vitro assembly process of the 50S ribosomal subunit. It is not involved in the protein synthesizing functions of that subunit. In Desulforudis audaxviator (strain MP104C), this protein is Large ribosomal subunit protein bL20.